The following is a 272-amino-acid chain: S-adenosylmethionine decarboxylase proenzyme (272 aa).

The Schiff-base intermediate with substrate; via pyruvic acid role is filled by Ser-122. Ser-122 carries the pyruvic acid (Ser); by autocatalysis modification. His-127 serves as the catalytic Proton acceptor; for processing activity. Residue Cys-150 is the Proton donor; for catalytic activity of the active site.

The protein belongs to the prokaryotic AdoMetDC family. Type 2 subfamily. Heterooctamer of four alpha and four beta chains arranged as a tetramer of alpha/beta heterodimers. Requires pyruvate as cofactor. In terms of processing, is synthesized initially as an inactive proenzyme. Formation of the active enzyme involves a self-maturation process in which the active site pyruvoyl group is generated from an internal serine residue via an autocatalytic post-translational modification. Two non-identical subunits are generated from the proenzyme in this reaction, and the pyruvate is formed at the N-terminus of the alpha chain, which is derived from the carboxyl end of the proenzyme. The post-translation cleavage follows an unusual pathway, termed non-hydrolytic serinolysis, in which the side chain hydroxyl group of the serine supplies its oxygen atom to form the C-terminus of the beta chain, while the remainder of the serine residue undergoes an oxidative deamination to produce ammonia and the pyruvoyl group blocking the N-terminus of the alpha chain.

It carries out the reaction S-adenosyl-L-methionine + H(+) = S-adenosyl 3-(methylsulfanyl)propylamine + CO2. It participates in amine and polyamine biosynthesis; S-adenosylmethioninamine biosynthesis; S-adenosylmethioninamine from S-adenosyl-L-methionine: step 1/1. Functionally, catalyzes the decarboxylation of S-adenosylmethionine to S-adenosylmethioninamine (dcAdoMet), the propylamine donor required for the synthesis of the polyamines spermine and spermidine from the diamine putrescine. This Clostridium botulinum (strain Eklund 17B / Type B) protein is S-adenosylmethionine decarboxylase proenzyme.